We begin with the raw amino-acid sequence, 901 residues long: Envelope glycoprotein B (901 aa).

Residues 1-34 (MRPVRGIARSRILSCSWRGTWTSALTILYLGVYC) form the signal peptide. The Virion surface portion of the chain corresponds to 35 to 736 (ESTTVTPTTV…GALVTFVTNP (702 aa)). N-linked (GlcNAc...) asparagine; by host glycans are attached at residues N53, N60, and N66. 4 disulfide bridges follow: C84–C533, C101–C489, C174–C239, and C331–C380. The segment at 141–147 (SYKYVTY) is involved in fusion and/or binding to host membrane. N197 carries N-linked (GlcNAc...) asparagine; by host glycosylation. Positions 226–233 (GSVWLYKE) are involved in fusion and/or binding to host membrane. N-linked (GlcNAc...) asparagine; by host glycosylation is found at N270, N289, N328, N372, N398, N406, N436, N537, N571, and N623. Residues C559 and C596 are joined by a disulfide bond. Hydrophobic membrane proximal region stretches follow at residues 683–734 (VERV…TFVT) and 714–734 (AVGAVGGAIGSFIGALVTFVT). The helical transmembrane segment at 737–757 (FGAFVVFLFCVGCITLVITVY) threads the bilayer. Topologically, residues 758-901 (RRQRRAMQRP…KLNTEDDVHV (144 aa)) are intravirion. Disordered stretches follow at residues 794–813 (GPEGTSGDAPPPYPGEAPYG) and 852–901 (DDKK…DVHV). 2 stretches are compositionally biased toward basic and acidic residues: residues 852 to 864 (DDKKRQEIEKSSK) and 872 to 883 (SETRRRPGIMDR). Positions 890–893 (YQKL) match the Internalization motif motif.

This sequence belongs to the herpesviridae glycoprotein B family. Homotrimer; disulfide-linked. Binds to heparan sulfate proteoglycans. Interacts with gH/gL heterodimer. In terms of processing, a proteolytic cleavage by host furin generates two subunits that remain linked by disulfide bonds.

Its subcellular location is the virion membrane. It localises to the host cell membrane. The protein localises to the host endosome membrane. It is found in the host Golgi apparatus membrane. Envelope glycoprotein that forms spikes at the surface of virion envelope. Essential for the initial attachment to heparan sulfate moieties of the host cell surface proteoglycans. Involved in fusion of viral and cellular membranes leading to virus entry into the host cell. Following initial binding to its host receptors, membrane fusion is mediated by the fusion machinery composed at least of gB and the heterodimer gH/gL. May be involved in the fusion between the virion envelope and the outer nuclear membrane during virion egress. This chain is Envelope glycoprotein B, found in Guinea pig cytomegalovirus (strain 22122) (GPCMV).